Consider the following 311-residue polypeptide: Formimidoylglutamase (311 aa).

6 residues coordinate Mn(2+): His130, Asp155, His157, Asp159, Cys242, and Asp244.

Belongs to the arginase family. Requires Mn(2+) as cofactor.

It carries out the reaction N-formimidoyl-L-glutamate + H2O = formamide + L-glutamate. It participates in amino-acid degradation; L-histidine degradation into L-glutamate; L-glutamate from N-formimidoyl-L-glutamate (hydrolase route): step 1/1. In terms of biological role, catalyzes the conversion of N-formimidoyl-L-glutamate to L-glutamate and formamide. In Staphylococcus haemolyticus (strain JCSC1435), this protein is Formimidoylglutamase.